The sequence spans 1342 residues: Subtilisin-like protease 2 (1342 aa).

Residues 1 to 18 form the signal peptide; sequence MLNIIYVVSLILIKFIFY. The propeptide at 19 to 687 is inhibition peptide; it reads KECNNNNNYY…KLYNNKYSFL (669 aa). Disordered stretches follow at residues 85 to 111 and 143 to 171; these read EKKTKGEENEIEKKKENDLEEKKENEI and ADVSNNDNSGHEENNKHKLNKKNSSNYKN. Residues N165, N343, N451, N455, and N493 are each glycosylated (N-linked (GlcNAc...) asparagine). The tract at residues 415 to 474 is disordered; the sequence is KKSKKEKENTQQKGGNNPNVDINILNNNNNNNNNNNNNSNNNSNSMNDEEINYNNNNNKE. The span at 430–474 shows a compositional bias: low complexity; that stretch reads NNPNVDINILNNNNNNNNNNNNNSNNNSNSMNDEEINYNNNNNKE. Positions 500 to 531 are disordered; the sequence is IYHNKNDNSYKNKKEGTGKNNDNNDPNNNNNK. A compositionally biased stretch (basic and acidic residues) spans 503-516; sequence NKNDNSYKNKKEGT. The span at 518–531 shows a compositional bias: low complexity; the sequence is KNNDNNDPNNNNNK. N-linked (GlcNAc...) asparagine glycosylation is found at N551, N642, and N729. Topologically, residues 688-1137 are extracellular; it reads NKFLNIEPLI…LYNLYEYDSH (450 aa). One can recognise a Peptidase S8 domain in the interval 727–1020; the sequence is TWNLSIIRVF…DSLVNAEGAV (294 aa). Active-site charge relay system residues include D755 and H798. N-linked (GlcNAc...) asparagine glycosylation is found at N821, N857, N893, and N951. Residue S961 is the Charge relay system of the active site. N-linked (GlcNAc...) asparagine glycosylation is found at N1010 and N1106. A helical membrane pass occupies residues 1138–1158; the sequence is YLLASVILFFLALLSIFVGMI. Residues 1159 to 1342 are Cytoplasmic-facing; that stretch reads YMKSRKHSDK…MNQLDDMFMK (184 aa).

This sequence belongs to the peptidase S8 family. Proteolytically cleaved at the N-terminus to generate a 74kDa intermediate which is further processed into a 72kDa form. The first maturation cleavage is autocatalytic, occurs in the ER and is necessary for the subsequent SUB2 trafficking to the microneme. The second cleavage may be mediated by PMX/plasmepsin X.

It localises to the cell membrane. It is found in the cytoplasmic vesicle. The protein resides in the secretory vesicle. The protein localises to the microneme membrane. It carries out the reaction Hydrolysis of proteins with broad specificity for peptide bonds, and a preference for a large uncharged residue in P1. Hydrolyzes peptide amides.. Activation may be calcium-dependent. Inhibited by the non-covalent interaction with the cleaved propeptide. Functionally, serine protease which plays an essential role in the shedding of AMA1, MSP1 and MSP7 from the surface of the invading merozoite; this step is essential for productive invasion and the release of the adhesion between the erythrocyte and the merozoite. May cleave TRAMP/PTTRAMP, thereby shedding TRAMP from the merozoite surface during erythrocyte invasion. The protein is Subtilisin-like protease 2 of Plasmodium falciparum.